The following is a 251-amino-acid chain: Haloacid dehalogenase-like hydrolase domain-containing protein 3 (251 aa).

Residue lysine 15 is modified to N6-acetyllysine; alternate. Position 15 is an N6-succinyllysine; alternate (lysine 15). Lysine 130 carries the N6-acetyllysine modification.

The protein belongs to the HAD-like hydrolase superfamily.

This chain is Haloacid dehalogenase-like hydrolase domain-containing protein 3 (Hdhd3), found in Mus musculus (Mouse).